Consider the following 326-residue polypeptide: Beta-ketoacyl-[acyl-carrier-protein] synthase III (326 aa).

Catalysis depends on residues Cys112 and His251. The segment at 252–256 (QANSR) is ACP-binding. The active site involves Asn281.

This sequence belongs to the thiolase-like superfamily. FabH family. In terms of assembly, homodimer.

Its subcellular location is the cytoplasm. It carries out the reaction malonyl-[ACP] + acetyl-CoA + H(+) = 3-oxobutanoyl-[ACP] + CO2 + CoA. It participates in lipid metabolism; fatty acid biosynthesis. Catalyzes the condensation reaction of fatty acid synthesis by the addition to an acyl acceptor of two carbons from malonyl-ACP. Catalyzes the first condensation reaction which initiates fatty acid synthesis and may therefore play a role in governing the total rate of fatty acid production. Possesses both acetoacetyl-ACP synthase and acetyl transacylase activities. Its substrate specificity determines the biosynthesis of branched-chain and/or straight-chain of fatty acids. This Clostridium botulinum (strain 657 / Type Ba4) protein is Beta-ketoacyl-[acyl-carrier-protein] synthase III.